The primary structure comprises 89 residues: UPF0297 protein lp_2275 (89 aa).

This sequence belongs to the UPF0297 family.

This Lactiplantibacillus plantarum (strain ATCC BAA-793 / NCIMB 8826 / WCFS1) (Lactobacillus plantarum) protein is UPF0297 protein lp_2275.